The sequence spans 183 residues: ATP-dependent protease subunit HslV (183 aa).

Thr-10 is an active-site residue. 3 residues coordinate Na(+): Ala-164, Cys-167, and Thr-170.

Belongs to the peptidase T1B family. HslV subfamily. A double ring-shaped homohexamer of HslV is capped on each side by a ring-shaped HslU homohexamer. The assembly of the HslU/HslV complex is dependent on binding of ATP.

Its subcellular location is the cytoplasm. It carries out the reaction ATP-dependent cleavage of peptide bonds with broad specificity.. With respect to regulation, allosterically activated by HslU binding. Its function is as follows. Protease subunit of a proteasome-like degradation complex believed to be a general protein degrading machinery. This Rhizorhabdus wittichii (strain DSM 6014 / CCUG 31198 / JCM 15750 / NBRC 105917 / EY 4224 / RW1) (Sphingomonas wittichii) protein is ATP-dependent protease subunit HslV.